Reading from the N-terminus, the 196-residue chain is Phosphoheptose isomerase (196 aa).

Residues 36-196 form the SIS domain; sequence MTNCLINGGK…GIDALLLGVE (161 aa). 51–53 serves as a coordination point for substrate; the sequence is NGG. Zn(2+) is bound by residues histidine 60 and glutamate 64. Residues glutamate 64, 93-94, 119-121, serine 124, and glutamine 174 contribute to the substrate site; these read ND and STS. Glutamine 174 and histidine 182 together coordinate Zn(2+).

The protein belongs to the SIS family. GmhA subfamily. As to quaternary structure, homotetramer. The cofactor is Zn(2+).

It is found in the cytoplasm. It catalyses the reaction 2 D-sedoheptulose 7-phosphate = D-glycero-alpha-D-manno-heptose 7-phosphate + D-glycero-beta-D-manno-heptose 7-phosphate. It functions in the pathway carbohydrate biosynthesis; D-glycero-D-manno-heptose 7-phosphate biosynthesis; D-glycero-alpha-D-manno-heptose 7-phosphate and D-glycero-beta-D-manno-heptose 7-phosphate from sedoheptulose 7-phosphate: step 1/1. In terms of biological role, catalyzes the isomerization of sedoheptulose 7-phosphate in D-glycero-D-manno-heptose 7-phosphate. In Dechloromonas aromatica (strain RCB), this protein is Phosphoheptose isomerase.